The following is a 95-amino-acid chain: Large ribosomal subunit protein eL31 (95 aa).

It belongs to the eukaryotic ribosomal protein eL31 family. In terms of assembly, part of the 50S ribosomal subunit.

In Pyrococcus furiosus (strain ATCC 43587 / DSM 3638 / JCM 8422 / Vc1), this protein is Large ribosomal subunit protein eL31.